A 258-amino-acid chain; its full sequence is Spindlin-2 (258 aa).

The tract at residues 1–47 is disordered; sequence MKTPHKKATARQQTREIVDDHTLSASMRKKKISQKKQRGRPSSQTRR. The segment covering 13 to 22 has biased composition (basic and acidic residues); the sequence is QTREIVDDHT. The segment covering 27–39 has biased composition (basic residues); the sequence is MRKKKISQKKQRG. Tudor-like domain regions lie at residues 50–99, 129–178, and 210–255; these read VGCR…LELH, IGKA…YQLL, and IGKH…YDLV. Histone H3K4me3 and H3R8me2a binding regions lie at residues Glu138 and 246–248; that span reads DFH.

The protein belongs to the SPIN/STSY family. As to quaternary structure, interacts with C11orf84/SPINDOC.

The protein localises to the nucleus. Functionally, may be involved in the regulation of cell cycle progression. Exhibits H3K4me3-binding activity. The sequence is that of Spindlin-2 (SPIN2) from Bos taurus (Bovine).